Consider the following 611-residue polypeptide: Homeobox protein BEL1 homolog (611 aa).

Disordered regions lie at residues 63 to 87 (QIRMTSGSDHHHHHHQTSGGTDQNQ), 101 to 133 (VNNDFPSEVNDERPPQRPSQGLSLSLSSSNPTS), 141 to 160 (LRPQQQQQQGYSGNKSTQHQ), and 174 to 195 (SHHQNNNNNNHQHHNHHQFQIG). Residues 118–133 (PSQGLSLSLSSSNPTS) are compositionally biased toward low complexity. The segment covering 174-183 (SHHQNNNNNN) has biased composition (low complexity). Residues 197–213 (SKYLSPAQELLSEFCSL) form an SR/KY domain region. The interval 225-263 (MKHKKKQKGKQQEEWDTSHHSNNDQHDQSATTSSKKHVP) is disordered. Over residues 234–251 (KQQEEWDTSHHSNNDQHD) the composition is skewed to basic and acidic residues. Residues 269 to 340 (EFMELQKRKA…CLKDGLVGQI (72 aa)) are BELL domain. The Bipartite nuclear localization signature appears at 275-290 (KRKAKLLSMLEELKRR). The segment at residues 391–453 (PWRPQRGLPE…NARVRLWKPM (63 aa)) is a DNA-binding region (homeobox).

Belongs to the TALE/BELL homeobox family. May form heterodimeric complexes with TALE/KNOX proteins STM, KNAT1/BP, KNAT2 and KNAT5. Interacts with AG-SEP1 and AG-SEP3 dimers. Interacts with KNATM, isoform KNATM-B. Interacts with BZIP30. In terms of tissue distribution, expressed in both floral and vegetative tissues.

It is found in the nucleus. In terms of biological role, plays a major role in ovule patterning and in determination of integument identity via its interaction with MADS-box factors. Formation of complex with AG-SEP dimers negatively regulates the carpel identity process and favors the maintenance of ovule identity. BEL1-STM complex maintains the indeterminacy of the inflorescence meristem. Required, with SPL, for cytokinin-induced PIN1 expression in ovules. The sequence is that of Homeobox protein BEL1 homolog (BEL1) from Arabidopsis thaliana (Mouse-ear cress).